A 185-amino-acid polypeptide reads, in one-letter code: MISDIRKDAEVRMDKCVEAFKTQISKIRTGRASPSLLDGIVVEYYGTPTPLRQLASVTVEDSRTLKINVFDRSMSPAVEKAIMASDLGLNPNSAGSDIRVPLPPLTEERRKDLTKIVRGEAEQARVAVRNVRRDANDKVKALLKDKEISEDDDRRSQDDVQKLTDAAIKKIEAALADKEAELMQF.

K162 bears the N6-acetyllysine mark.

It belongs to the RRF family.

The protein resides in the cytoplasm. Its function is as follows. Responsible for the release of ribosomes from messenger RNA at the termination of protein biosynthesis. May increase the efficiency of translation by recycling ribosomes from one round of translation to another. This is Ribosome-recycling factor from Shigella boydii serotype 18 (strain CDC 3083-94 / BS512).